A 191-amino-acid polypeptide reads, in one-letter code: Molybdenum cofactor guanylyltransferase (191 aa).

Residues 13–15 (LAG), Lys-26, Asp-72, and Asp-102 each bind GTP. Asp-102 lines the Mg(2+) pocket.

The protein belongs to the MobA family. Monomer. Requires Mg(2+) as cofactor.

Its subcellular location is the cytoplasm. It carries out the reaction Mo-molybdopterin + GTP + H(+) = Mo-molybdopterin guanine dinucleotide + diphosphate. In terms of biological role, transfers a GMP moiety from GTP to Mo-molybdopterin (Mo-MPT) cofactor (Moco or molybdenum cofactor) to form Mo-molybdopterin guanine dinucleotide (Mo-MGD) cofactor. The sequence is that of Molybdenum cofactor guanylyltransferase from Pseudomonas putida (Arthrobacter siderocapsulatus).